A 417-amino-acid chain; its full sequence is CinA-like protein (417 aa).

It belongs to the CinA family.

The polypeptide is CinA-like protein (Leptospira biflexa serovar Patoc (strain Patoc 1 / Ames)).